We begin with the raw amino-acid sequence, 277 residues long: MKIVLILEYDGRGYCGWQKQPDRISVQSRLESALSRIASSQIQVVAAGRTDAGVHALCQVVHFETHVIRPLTAWVRGANALLPDDISVLWASEVNDDFHARFSATERTYLYYLLSRPARPGIFQGKTGWTHYSLDLEKMQTAARFLIGEHDFSAFRSAECQAKNAIRKLVRLDISQSEQFFVFEFCANAFLHHMVRNILGALIYIGQGKYPPEWIQILLGKRDRTLAAPTFSPDGLYLAGVRYDARWNLPTFNVIRPENVINMIASFKYSQNWAGLR.

Asp51 serves as the catalytic Nucleophile. Substrate is bound at residue Tyr109.

This sequence belongs to the tRNA pseudouridine synthase TruA family. Homodimer.

It catalyses the reaction uridine(38/39/40) in tRNA = pseudouridine(38/39/40) in tRNA. Functionally, formation of pseudouridine at positions 38, 39 and 40 in the anticodon stem and loop of transfer RNAs. This Nitrosomonas eutropha (strain DSM 101675 / C91 / Nm57) protein is tRNA pseudouridine synthase A.